The chain runs to 126 residues: Lymphocyte antigen 6 complex locus protein G6c (126 aa).

Positions 1–19 (MKHLLLLTLSALLYCWVSA) are cleaved as a signal peptide. In terms of domain architecture, UPAR/Ly6 spans 21 to 112 (TRCHSCYKVP…PRPTPALALI (92 aa)). 3 cysteine pairs are disulfide-bonded: Cys-23-Cys-48, Cys-26-Cys-34, and Cys-40-Cys-66. N-linked (GlcNAc...) (high mannose) asparagine glycosylation is present at Asn-89. Residues Cys-93 and Cys-98 are joined by a disulfide bond. Residue Ser-100 is the site of GPI-anchor amidated serine attachment. The propeptide at 101–126 (PAPRPTPALALISLTSLAGLGLWLLH) is removed in mature form.

In terms of assembly, monomer. N-glycosylated. Highly expressed at the leading edges of cells, on filopodia.

The protein resides in the cell membrane. The polypeptide is Lymphocyte antigen 6 complex locus protein G6c (Ly6g6c) (Mus musculus (Mouse)).